Reading from the N-terminus, the 442-residue chain is Chromosomal replication initiator protein DnaA (442 aa).

Residues 1 to 75 form a domain I, interacts with DnaA modulators region; sequence MDAWPRCLER…GNGEVALAVG (75 aa). The segment at 75 to 104 is domain II; that stretch reads GSRPRAPEPAPAAAAVPSAPQAAPMVPFAG. A domain III, AAA+ region region spans residues 105–322; that stretch reads NLDSHYTFAN…GALNTLVARA (218 aa). Positions 150, 152, 153, and 154 each coordinate ATP. A domain IV, binds dsDNA region spans residues 323 to 442; it reads NFTGRSITVE…WEKLIRKLSE (120 aa).

This sequence belongs to the DnaA family. Oligomerizes as a right-handed, spiral filament on DNA at oriC.

It localises to the cytoplasm. In terms of biological role, plays an essential role in the initiation and regulation of chromosomal replication. ATP-DnaA binds to the origin of replication (oriC) to initiate formation of the DNA replication initiation complex once per cell cycle. Binds the DnaA box (a 9 base pair repeat at the origin) and separates the double-stranded (ds)DNA. Forms a right-handed helical filament on oriC DNA; dsDNA binds to the exterior of the filament while single-stranded (ss)DNA is stabiized in the filament's interior. The ATP-DnaA-oriC complex binds and stabilizes one strand of the AT-rich DNA unwinding element (DUE), permitting loading of DNA polymerase. After initiation quickly degrades to an ADP-DnaA complex that is not apt for DNA replication. Binds acidic phospholipids. The protein is Chromosomal replication initiator protein DnaA of Xanthomonas euvesicatoria pv. vesicatoria (strain 85-10) (Xanthomonas campestris pv. vesicatoria).